Reading from the N-terminus, the 367-residue chain is Anhydro-N-acetylmuramic acid kinase (367 aa).

13–20 serves as a coordination point for ATP; sequence GTSMDGAD.

The protein belongs to the anhydro-N-acetylmuramic acid kinase family.

The enzyme catalyses 1,6-anhydro-N-acetyl-beta-muramate + ATP + H2O = N-acetyl-D-muramate 6-phosphate + ADP + H(+). Its pathway is amino-sugar metabolism; 1,6-anhydro-N-acetylmuramate degradation. It functions in the pathway cell wall biogenesis; peptidoglycan recycling. Its function is as follows. Catalyzes the specific phosphorylation of 1,6-anhydro-N-acetylmuramic acid (anhMurNAc) with the simultaneous cleavage of the 1,6-anhydro ring, generating MurNAc-6-P. Is required for the utilization of anhMurNAc either imported from the medium or derived from its own cell wall murein, and thus plays a role in cell wall recycling. The protein is Anhydro-N-acetylmuramic acid kinase of Neisseria meningitidis serogroup B (strain ATCC BAA-335 / MC58).